A 279-amino-acid polypeptide reads, in one-letter code: Urease accessory protein UreD (279 aa).

It belongs to the UreD family. As to quaternary structure, ureD, UreF and UreG form a complex that acts as a GTP-hydrolysis-dependent molecular chaperone, activating the urease apoprotein by helping to assemble the nickel containing metallocenter of UreC. The UreE protein probably delivers the nickel.

Its subcellular location is the cytoplasm. Functionally, required for maturation of urease via the functional incorporation of the urease nickel metallocenter. This Pseudomonas fluorescens (strain ATCC BAA-477 / NRRL B-23932 / Pf-5) protein is Urease accessory protein UreD.